Here is a 253-residue protein sequence, read N- to C-terminus: Zinc finger protein JAGGED (253 aa).

Residues 1–46 form a disordered region; the sequence is MRHEENYLDLNNLPDDFSKDGNKQALEEGSSSGQRKKKGSKEGKDE. Residues 16–26 are compositionally biased toward basic and acidic residues; that stretch reads DFSKDGNKQAL. A C2H2-type zinc finger spans residues 51–73; sequence YECRFCSLKFCKSQALGGHMNRH.

As to quaternary structure, interacts with GATA18/HAN. In terms of tissue distribution, expressed in the emerging leaf, sepal, petal, stamen and carpel primordia. Not expressed in the apical shoot meristem (SAM).

Its subcellular location is the nucleus. In terms of biological role, controls the morphogenesis of lateral organs. Functions in lateral organ shape and is sufficient to induce proliferation and growth of lateral organ tissue. Is necessary and sufficient for bract formation, but its expression is excluded from the cryptic bract, which could be a cause of bractless flowers in Arabidopsis. Participates with FIL and YAB3 in regulating valve margin development. Functions with JGL to define stamen and carpel shape. Functions with AS1 and AS2 in the sepal and petal primordia to repress boundary-specifying genes for normal development of the organs. This is Zinc finger protein JAGGED (JAG) from Arabidopsis thaliana (Mouse-ear cress).